The following is a 730-amino-acid chain: Trimethylamine dehydrogenase (730 aa).

Residues proline 29, cysteine 31, tyrosine 61, and glutamate 104 each coordinate FMN. Cysteine 31 carries the S-6-FMN cysteine modification. 170–173 (YGAH) lines the substrate pocket. Catalysis depends on tyrosine 175, which acts as the Proton donor. Positions 223, 268, 300, 322, and 323 each coordinate FMN. [4Fe-4S] cluster-binding residues include cysteine 346, cysteine 349, cysteine 352, and cysteine 365. ADP-binding residues include serine 401, aspartate 420, threonine 421, histidine 428, methionine 471, and aspartate 675.

It in the N-terminal section; belongs to the NADH:flavin oxidoreductase/NADH oxidase family. In terms of assembly, homodimer. Forms a ternary complex with the heterodimeric electron transfer flavoprotein. FMN serves as cofactor. It depends on [4Fe-4S] cluster as a cofactor.

It catalyses the reaction trimethylamine + oxidized [electron-transfer flavoprotein] + H2O + H(+) = dimethylamine + reduced [electron-transfer flavoprotein] + formaldehyde. This chain is Trimethylamine dehydrogenase, found in Methylophilus methylotrophus (Bacterium W3A1).